Here is an 877-residue protein sequence, read N- to C-terminus: Alanine--tRNA ligase (877 aa).

4 residues coordinate Zn(2+): histidine 564, histidine 568, cysteine 666, and histidine 670.

This sequence belongs to the class-II aminoacyl-tRNA synthetase family. It depends on Zn(2+) as a cofactor.

The protein resides in the cytoplasm. It catalyses the reaction tRNA(Ala) + L-alanine + ATP = L-alanyl-tRNA(Ala) + AMP + diphosphate. Functionally, catalyzes the attachment of alanine to tRNA(Ala) in a two-step reaction: alanine is first activated by ATP to form Ala-AMP and then transferred to the acceptor end of tRNA(Ala). Also edits incorrectly charged Ser-tRNA(Ala) and Gly-tRNA(Ala) via its editing domain. The protein is Alanine--tRNA ligase of Pelotomaculum thermopropionicum (strain DSM 13744 / JCM 10971 / SI).